The chain runs to 527 residues: Protein PLASTID TRANSCRIPTIONALLY ACTIVE 12, chloroplastic (527 aa).

The transit peptide at 1-30 (MASISTTTWLYRGQVCTDSGKSSNCIVQRR) directs the protein to the chloroplast. The tract at residues 1 to 115 (MASISTTTWL…ASIPGEDYWP (115 aa)) is PHYA-interacting region 1 (PIR1). The tract at residues 89–188 (SYMDSTSGKL…NDSSDGFVTY (100 aa)) is disordered. Positions 163–181 (TNDEVSDSEDSSEEEENDS) are enriched in acidic residues. 2 short sequence motifs (nuclear localization signal) span residues 204-211 (DKKLGRPH) and 235-242 (WRKPEKEQ). Positions 252–352 (DVETVFLKAM…EMFSHQTDRE (101 aa)) are PHYA-interacting region 2 (PIR2). Residues 458-471 (GENDDDEDDADVEK) show a composition bias toward acidic residues. A disordered region spans residues 458–527 (GENDDDEDDA…LMDFEEETDP (70 aa)). The span at 485–504 (ETPELRTAKPKPKKEGRMSL) shows a compositional bias: basic and acidic residues. Positions 506–527 (EAVDDAENLTDFLMDFEEETDP) are enriched in acidic residues. Positions 512-520 (ENLTDFLMD) match the Required and sufficient for transcriptional transactivation activity and to trigger PIF proteins degradation motif.

In terms of assembly, component of the transcriptionally active chromosome (TAC) complexes. Interacts with PTAC14 and PTAC7. Binds directly to PTAC6/PAP8 in the nucleus. Interacts with MED14. Binds to SL1/MTERF3. Binds to photoactivated phytochromes (e.g. PHYA and PHYB) via their photosensory domains; these interactions stimulate its light-mediated accumulation. Associates, via its N-terminal region, with phytochrome-interacting factors (PIFs) including PIF1, PIF3, PIF4, PIF5, PIF6, BHLH72/PIF7, UNE10/PIF8 and PIL1. Binds to RAD4. Associates with MRL7/RCB. In terms of tissue distribution, mostly expressed in cotyledons, leaves, stems and flowers, but barely in roots.

It localises to the plastid. It is found in the chloroplast. The protein resides in the nucleus. Its function is as follows. Involved in plastid gene expression. Acidic transcriptional coactivator necessary for the transactivation of many PIFs target genes (class B genes), particularly during the regulation of hypocotyl growth. Plays dual opposite roles in regulating hypocotyl growth, preventing it in red and far-red conditions, but promoting it otherwise. Required in the nucleus for the initiation of photomorphogenesis mediated by phytochromes (PHYs) (e.g. PHYA and PHYB) by mediating PHYs localization to photobodies, especially in response to red and far-red light, and implicating phytochrome nuclear bodies as sites of proteolysis for PHYs and PIFs proteins (e.g. PIF1 and PIF3). Acts downstream of PHYs and upstream of DET1. Involved in UV tolerance in both roots and hypocotyls, specifically in dark conditions. Element of a PIF4/HMR/MED14-dependent thermoresponsive process; acts as a PIF4 transcriptional coactivator to trigger the thermoresponsive growth-relevant genes (e.g. mainly involved in biosynthesis and signaling of the phytohormone auxin) and promote warm-temperature-dependent (e.g. 27 degrees Celsius) PIF4 and MED14 stabilization and accumulation, being more prominently involved in long days (LD) and continuous red light (Rc) than in short days (SD), thus modulating warm temperature elicitation of MED14-dependent thermomorphogenesis (e.g. hypocotyl elongation). The chain is Protein PLASTID TRANSCRIPTIONALLY ACTIVE 12, chloroplastic from Arabidopsis thaliana (Mouse-ear cress).